Consider the following 227-residue polypeptide: Orotate phosphoribosyltransferase (227 aa).

5-phospho-alpha-D-ribose 1-diphosphate is bound by residues K51, R119, K120, and K123. Positions 149 and 177 each coordinate orotate.

The protein belongs to the purine/pyrimidine phosphoribosyltransferase family. PyrE subfamily. As to quaternary structure, homodimer. In terms of tissue distribution, expressed in body wall muscles, spermatheca and vulva muscles.

The enzyme catalyses orotidine 5'-phosphate + diphosphate = orotate + 5-phospho-alpha-D-ribose 1-diphosphate. It catalyses the reaction UMP + diphosphate = 5-phospho-alpha-D-ribose 1-diphosphate + uracil. It participates in pyrimidine metabolism; UMP biosynthesis via de novo pathway; UMP from orotate: step 1/2. It functions in the pathway pyrimidine metabolism; UMP biosynthesis via salvage pathway; UMP from uracil: step 1/1. Functionally, phosphoribosyltransferase which catalyzes the formation of UMP from uracil in vitro and thus may be involved in UMP biosynthesis via the salvage pathway. May also participate in the first step of UMP synthesis by catalyzing the formation of orotidine 5'-phosphate, a UMP precursor, from orotate. The chain is Orotate phosphoribosyltransferase from Caenorhabditis elegans.